A 270-amino-acid chain; its full sequence is Putative methylsterol monooxygenase DDB_G0269788 (270 aa).

3 helical membrane-spanning segments follow: residues phenylalanine 31–methionine 51, isoleucine 82–serine 102, and isoleucine 110–tryptophan 130. Residues alanine 118–threonine 249 form the Fatty acid hydroxylase domain. The short motif at histidine 132–histidine 136 is the Histidine box-1 element. The short motif at histidine 145 to histidine 149 is the Histidine box-2 element. The short motif at phenylalanine 224 to glutamate 230 is the Histidine box-3 element.

Belongs to the sterol desaturase family. Requires Fe cation as cofactor.

Its subcellular location is the endoplasmic reticulum membrane. It catalyses the reaction 4,4-dimethyl-5alpha-cholest-7-en-3beta-ol + 6 Fe(II)-[cytochrome b5] + 3 O2 + 5 H(+) = 4alpha-carboxy-4beta-methyl-5alpha-cholest-7-ene-3beta-ol + 6 Fe(III)-[cytochrome b5] + 4 H2O. Its pathway is steroid biosynthesis; zymosterol biosynthesis; zymosterol from lanosterol: step 3/6. This is Putative methylsterol monooxygenase DDB_G0269788 from Dictyostelium discoideum (Social amoeba).